The chain runs to 400 residues: Subtilisin-like protease 2 (400 aa).

The first 20 residues, 1–20, serve as a signal peptide directing secretion; the sequence is MKFSQSLIALAACFLPLIAA. Positions 21-119 are excised as a propeptide; the sequence is APEEAQHAKI…IERDGKVQAN (99 aa). Residues 42–117 enclose the Inhibitor I9 domain; the sequence is SYIVVFNKGV…AWIERDGKVQ (76 aa). N-linked (GlcNAc...) asparagine glycosylation occurs at Asn-82. Positions 128-400 constitute a Peptidase S8 domain; that stretch reads TWGLGRISHK…NLIAYNGNGA (273 aa). Catalysis depends on charge relay system residues Asp-160, His-192, and Ser-345.

This sequence belongs to the peptidase S8 family.

The protein resides in the secreted. Potently inhibited by the serine peptidase inhibitor chymostatin. Also inhibited by antpain and PMSF. Major secreted subtilisin-like serine endopeptidase. Preferentially cleaves substrates containing hydrophobic residues at P4, positively charged residues at P3, small or flexible residues at P2, and large, bulky residues at P1. Mediates the degradation of collagen, the major structural protein in the mammalian host. Degrades the nonhelical regions of collagen that function in the cross-linking of the helical components. May function as virulence factor involved in epidermal wing necrosis observed in white nose syndrome (WNS) in bats. This is Subtilisin-like protease 2 from Pseudogymnoascus destructans (strain ATCC MYA-4855 / 20631-21) (Bat white-nose syndrome fungus).